We begin with the raw amino-acid sequence, 240 residues long: Intestine-specific homeobox (240 aa).

Positions 36-82 are disordered; that stretch reads PTERRSLPRPQSICKEDSRQTTIPGSKLERPPQDQPQEEKKNKRRVR. Over residues 62–76 the composition is skewed to basic and acidic residues; the sequence is KLERPPQDQPQEEKK. The homeobox DNA-binding region spans 78-137; the sequence is KRRVRTTFTTEQLQELEKLFHFTHYPDIHVRSQLASRINLPEARVQIWFQNQRAKWRKQE.

As to expression, expressed in intestinal epithelial cells from the duodenum to the proximal colon.

It is found in the nucleus. Its function is as follows. Transcription factor that regulates gene expression in intestine. May participate in vitamin A metabolism most likely by regulating BCO1 expression in the intestine. This is Intestine-specific homeobox (Isx) from Mus musculus (Mouse).